A 271-amino-acid polypeptide reads, in one-letter code: 3-methyl-2-oxobutanoate hydroxymethyltransferase (271 aa).

Positions 51 and 90 each coordinate Mg(2+). Residues 51 to 52, Asp-90, and Lys-118 each bind 3-methyl-2-oxobutanoate; that span reads DS. Glu-120 is a binding site for Mg(2+). The Proton acceptor role is filled by Glu-186.

Belongs to the PanB family. In terms of assembly, homodecamer; pentamer of dimers. Requires Mg(2+) as cofactor.

It localises to the cytoplasm. The catalysed reaction is 3-methyl-2-oxobutanoate + (6R)-5,10-methylene-5,6,7,8-tetrahydrofolate + H2O = 2-dehydropantoate + (6S)-5,6,7,8-tetrahydrofolate. Its pathway is cofactor biosynthesis; (R)-pantothenate biosynthesis; (R)-pantoate from 3-methyl-2-oxobutanoate: step 1/2. In terms of biological role, catalyzes the reversible reaction in which hydroxymethyl group from 5,10-methylenetetrahydrofolate is transferred onto alpha-ketoisovalerate to form ketopantoate. The chain is 3-methyl-2-oxobutanoate hydroxymethyltransferase from Xanthomonas axonopodis pv. citri (strain 306).